The primary structure comprises 364 residues: tRNA 2-selenouridine synthase (364 aa).

The Rhodanese domain occupies 14–137; it reads LIADTPIIDV…LRQTAIQATI (124 aa). Cys97 serves as the catalytic S-selanylcysteine intermediate.

This sequence belongs to the SelU family. In terms of assembly, monomer.

It carries out the reaction 5-methylaminomethyl-2-thiouridine(34) in tRNA + selenophosphate + (2E)-geranyl diphosphate + H2O + H(+) = 5-methylaminomethyl-2-selenouridine(34) in tRNA + (2E)-thiogeraniol + phosphate + diphosphate. It catalyses the reaction 5-methylaminomethyl-2-thiouridine(34) in tRNA + (2E)-geranyl diphosphate = 5-methylaminomethyl-S-(2E)-geranyl-thiouridine(34) in tRNA + diphosphate. The enzyme catalyses 5-methylaminomethyl-S-(2E)-geranyl-thiouridine(34) in tRNA + selenophosphate + H(+) = 5-methylaminomethyl-2-(Se-phospho)selenouridine(34) in tRNA + (2E)-thiogeraniol. The catalysed reaction is 5-methylaminomethyl-2-(Se-phospho)selenouridine(34) in tRNA + H2O = 5-methylaminomethyl-2-selenouridine(34) in tRNA + phosphate. In terms of biological role, involved in the post-transcriptional modification of the uridine at the wobble position (U34) of tRNA(Lys), tRNA(Glu) and tRNA(Gln). Catalyzes the conversion of 2-thiouridine (S2U-RNA) to 2-selenouridine (Se2U-RNA). Acts in a two-step process involving geranylation of 2-thiouridine (S2U) to S-geranyl-2-thiouridine (geS2U) and subsequent selenation of the latter derivative to 2-selenouridine (Se2U) in the tRNA chain. This Escherichia coli (strain SE11) protein is tRNA 2-selenouridine synthase.